The sequence spans 158 residues: Transcription elongation factor GreA (158 aa).

Belongs to the GreA/GreB family.

In terms of biological role, necessary for efficient RNA polymerase transcription elongation past template-encoded arresting sites. The arresting sites in DNA have the property of trapping a certain fraction of elongating RNA polymerases that pass through, resulting in locked ternary complexes. Cleavage of the nascent transcript by cleavage factors such as GreA or GreB allows the resumption of elongation from the new 3'terminus. GreA releases sequences of 2 to 3 nucleotides. This chain is Transcription elongation factor GreA, found in Hamiltonella defensa subsp. Acyrthosiphon pisum (strain 5AT).